Consider the following 216-residue polypeptide: Urease accessory protein UreG (216 aa).

GTP is bound at residue Gly25 to Thr32.

It belongs to the SIMIBI class G3E GTPase family. UreG subfamily. Homodimer. UreD, UreF and UreG form a complex that acts as a GTP-hydrolysis-dependent molecular chaperone, activating the urease apoprotein by helping to assemble the nickel containing metallocenter of UreC. The UreE protein probably delivers the nickel.

The protein resides in the cytoplasm. Functionally, facilitates the functional incorporation of the urease nickel metallocenter. This process requires GTP hydrolysis, probably effectuated by UreG. This is Urease accessory protein UreG from Burkholderia thailandensis (strain ATCC 700388 / DSM 13276 / CCUG 48851 / CIP 106301 / E264).